The chain runs to 353 residues: Probable dual-specificity RNA methyltransferase RlmN (353 aa).

E104 acts as the Proton acceptor in catalysis. Residues 112–341 (DGGRKTICIS…ILNRRSPGKD (230 aa)) form the Radical SAM core domain. C119 and C346 form a disulfide bridge. [4Fe-4S] cluster-binding residues include C126, C130, and C133. S-adenosyl-L-methionine-binding positions include 173–174 (GE), S205, 228–230 (SLN), and N304. The S-methylcysteine intermediate role is filled by C346.

The protein belongs to the radical SAM superfamily. RlmN family. [4Fe-4S] cluster is required as a cofactor.

It localises to the cytoplasm. The catalysed reaction is adenosine(2503) in 23S rRNA + 2 reduced [2Fe-2S]-[ferredoxin] + 2 S-adenosyl-L-methionine = 2-methyladenosine(2503) in 23S rRNA + 5'-deoxyadenosine + L-methionine + 2 oxidized [2Fe-2S]-[ferredoxin] + S-adenosyl-L-homocysteine. It catalyses the reaction adenosine(37) in tRNA + 2 reduced [2Fe-2S]-[ferredoxin] + 2 S-adenosyl-L-methionine = 2-methyladenosine(37) in tRNA + 5'-deoxyadenosine + L-methionine + 2 oxidized [2Fe-2S]-[ferredoxin] + S-adenosyl-L-homocysteine. Functionally, specifically methylates position 2 of adenine 2503 in 23S rRNA and position 2 of adenine 37 in tRNAs. The sequence is that of Probable dual-specificity RNA methyltransferase RlmN from Leptospira interrogans serogroup Icterohaemorrhagiae serovar copenhageni (strain Fiocruz L1-130).